The chain runs to 285 residues: Probable E3 ubiquitin-protein ligase IE1 (285 aa).

Topologically, residues 1-201 (MASKDSDVRC…LPGYWDRDDR (201 aa)) are cytoplasmic. The segment at 124 to 183 (SIDEEGKQCWICRDGESLPEARYCNCYGDLQYCHEECLKTWISMSGEKKCKFCQTPYKVN) adopts an RING-CH-type zinc-finger fold. The Zn(2+) site is built by Cys-132, Cys-135, Cys-147, Cys-149, His-157, Cys-160, Cys-173, and Cys-176. A helical transmembrane segment spans residues 202 to 222 (FVFIAGFIGMGTILAGWIASF). The Extracellular segment spans residues 223 to 238 (FYLLVVLCGKYFTYKD). A helical membrane pass occupies residues 239–259 (VMIVVGGLAIIQVVGLMFSLF). The Cytoplasmic portion of the chain corresponds to 260-285 (MYFQIGNLLRQYINYMTETNIDPLRT).

It is found in the membrane. It catalyses the reaction S-ubiquitinyl-[E2 ubiquitin-conjugating enzyme]-L-cysteine + [acceptor protein]-L-lysine = [E2 ubiquitin-conjugating enzyme]-L-cysteine + N(6)-ubiquitinyl-[acceptor protein]-L-lysine.. The protein operates within protein modification; protein ubiquitination. In terms of biological role, controls the expression of later classes of genes and also of the IE genes (Potential). E3 ubiquitin-protein ligase. E3 ubiquitin ligases accept ubiquitin from an E2 ubiquitin-conjugating enzyme in the form of a thioester and then directly transfer the ubiquitin to targeted substrates. This chain is Probable E3 ubiquitin-protein ligase IE1 (IE1), found in Bovine herpesvirus 4 (strain DN-599) (BoHV-4).